The following is a 578-amino-acid chain: Probable arginine--tRNA ligase, mitochondrial (578 aa).

Residues 1-16 (MACGFRRSIASQLSRV) constitute a mitochondrion transit peptide. L-arginine is bound by residues 133–135 (SPN), histidine 144, tyrosine 322, aspartate 326, and glutamine 350. The 'HIGH' region motif lies at 133–144 (SPNVAKKFHVGH). Lysine 568 bears the N6-acetyllysine mark.

It belongs to the class-I aminoacyl-tRNA synthetase family.

It is found in the mitochondrion membrane. It catalyses the reaction tRNA(Arg) + L-arginine + ATP = L-arginyl-tRNA(Arg) + AMP + diphosphate. In terms of biological role, catalyzes the attachment of arginine to tRNA(Arg) in a two-step reaction: arginine is first activated by ATP to form Arg-AMP and then transferred to the acceptor end of tRNA(Arg). This is Probable arginine--tRNA ligase, mitochondrial (RARS2) from Bos taurus (Bovine).